A 354-amino-acid polypeptide reads, in one-letter code: tRNA N6-adenosine threonylcarbamoyltransferase (354 aa).

Residues H111 and H115 each contribute to the Fe cation site. Substrate contacts are provided by residues 134-138, D167, G180, and N279; that span reads LVSGG. D319 serves as a coordination point for Fe cation.

Belongs to the KAE1 / TsaD family. The cofactor is Fe(2+).

It localises to the cytoplasm. The enzyme catalyses L-threonylcarbamoyladenylate + adenosine(37) in tRNA = N(6)-L-threonylcarbamoyladenosine(37) in tRNA + AMP + H(+). Its function is as follows. Required for the formation of a threonylcarbamoyl group on adenosine at position 37 (t(6)A37) in tRNAs that read codons beginning with adenine. Is involved in the transfer of the threonylcarbamoyl moiety of threonylcarbamoyl-AMP (TC-AMP) to the N6 group of A37, together with TsaE and TsaB. TsaD likely plays a direct catalytic role in this reaction. In Neisseria gonorrhoeae (strain ATCC 700825 / FA 1090), this protein is tRNA N6-adenosine threonylcarbamoyltransferase.